Here is a 457-residue protein sequence, read N- to C-terminus: MEIFPISLKLQQQRCLIVGGGHIAYRKAILLVKAGAILDIVAPDIDPQLMSLIEQSAGTAYVKLFEDHDLDRVYRLVIAATDNADVNKRVFEQAELRNLLVNSVDDIPNCRFMVPAIIDRSPLLISVASNGASPVLSRQLRTQIETLVPHGMGKLAEFSGQWRSRVKAQITNPDERRIFWEELYASPLKEQVFNDNLDIANQMMTQSLAEWTAPKGEVYLVGAGPGDPELLTLKALRLMQQADVVIYDRLVSAPILELCRRDAEKVYVGKARSNHSVPQEGINALLVKYAQAGKRVCRLKGGDPFIFGRGGEEIQELFAAGIPFQVVPGITAASGCSAYAGIPLTHRDYAQSVRFLTGHLKEGSPELPWSELVYENQTLVLYMGLVGLEHICQQLIAHGQRPDMPVALVSKGTTPEQKVVVGTLSNIASKIAEYQIHAPTLTIIGEVVSLREQLQWL.

The interval 1 to 204 (MEIFPISLKL…DNLDIANQMM (204 aa)) is precorrin-2 dehydrogenase /sirohydrochlorin ferrochelatase. NAD(+) contacts are provided by residues 22–23 (HI) and 43–44 (PD). Ser129 bears the Phosphoserine mark. The segment at 216-457 (GEVYLVGAGP…VSLREQLQWL (242 aa)) is uroporphyrinogen-III C-methyltransferase. Pro225 lines the S-adenosyl-L-methionine pocket. The Proton acceptor role is filled by Asp248. The active-site Proton donor is the Lys270. S-adenosyl-L-methionine-binding positions include 301 to 303 (GGD), Ile306, 331 to 332 (TA), Met383, and Gly412.

It in the N-terminal section; belongs to the precorrin-2 dehydrogenase / sirohydrochlorin ferrochelatase family. The protein in the C-terminal section; belongs to the precorrin methyltransferase family.

It carries out the reaction uroporphyrinogen III + 2 S-adenosyl-L-methionine = precorrin-2 + 2 S-adenosyl-L-homocysteine + H(+). The catalysed reaction is precorrin-2 + NAD(+) = sirohydrochlorin + NADH + 2 H(+). It catalyses the reaction siroheme + 2 H(+) = sirohydrochlorin + Fe(2+). The protein operates within cofactor biosynthesis; adenosylcobalamin biosynthesis; precorrin-2 from uroporphyrinogen III: step 1/1. It participates in cofactor biosynthesis; adenosylcobalamin biosynthesis; sirohydrochlorin from precorrin-2: step 1/1. Its pathway is porphyrin-containing compound metabolism; siroheme biosynthesis; precorrin-2 from uroporphyrinogen III: step 1/1. It functions in the pathway porphyrin-containing compound metabolism; siroheme biosynthesis; siroheme from sirohydrochlorin: step 1/1. The protein operates within porphyrin-containing compound metabolism; siroheme biosynthesis; sirohydrochlorin from precorrin-2: step 1/1. Functionally, multifunctional enzyme that catalyzes the SAM-dependent methylations of uroporphyrinogen III at position C-2 and C-7 to form precorrin-2 via precorrin-1. Then it catalyzes the NAD-dependent ring dehydrogenation of precorrin-2 to yield sirohydrochlorin. Finally, it catalyzes the ferrochelation of sirohydrochlorin to yield siroheme. This chain is Siroheme synthase, found in Acinetobacter baylyi (strain ATCC 33305 / BD413 / ADP1).